Reading from the N-terminus, the 154-residue chain is Superoxide dismutase [Cu-Zn] (154 aa).

Positions 47, 49, and 64 each coordinate Cu cation. Cysteines 58 and 147 form a disulfide. Zn(2+) contacts are provided by His-64, His-72, His-81, and Asp-84. His-121 is a binding site for Cu cation. Basic and acidic residues predominate over residues 125–136 (DDLGKGGNEESL). The segment at 125-144 (DDLGKGGNEESLKTGNAGPR) is disordered. Residue Arg-144 coordinates substrate.

The protein belongs to the Cu-Zn superoxide dismutase family. As to quaternary structure, homodimer. Cu cation serves as cofactor. The cofactor is Zn(2+).

The protein resides in the cytoplasm. The enzyme catalyses 2 superoxide + 2 H(+) = H2O2 + O2. In terms of biological role, destroys radicals which are normally produced within the cells and which are toxic to biological systems. The sequence is that of Superoxide dismutase [Cu-Zn] (sod-1) from Neurospora crassa (strain ATCC 24698 / 74-OR23-1A / CBS 708.71 / DSM 1257 / FGSC 987).